The primary structure comprises 266 residues: Undecaprenyl-diphosphatase (266 aa).

Transmembrane regions (helical) follow at residues 1 to 21 (MDTFQVIILALIQGLTEFLPI), 39 to 59 (QGLSFDVAVNTGSLLAVVMYF), 87 to 107 (WWIILATIPAVIVGFTAKDFI), 115 to 135 (AVIATTTIVFGLLLWWADRMF), 144 to 164 (VGWKKALVIGVAQAMALIPGT), 183 to 203 (AAARFSFLMSVPVSLGAAILV), 218 to 238 (ALSLGIIVSFVAAYTCIHLFL), and 246 to 266 (MTPFVIYRLALGAILCAFMFA).

It belongs to the UppP family.

It localises to the cell inner membrane. The enzyme catalyses di-trans,octa-cis-undecaprenyl diphosphate + H2O = di-trans,octa-cis-undecaprenyl phosphate + phosphate + H(+). Catalyzes the dephosphorylation of undecaprenyl diphosphate (UPP). Confers resistance to bacitracin. This is Undecaprenyl-diphosphatase from Shewanella sediminis (strain HAW-EB3).